Here is a 424-residue protein sequence, read N- to C-terminus: Serine--tRNA ligase (424 aa).

Residue 230–232 participates in L-serine binding; that stretch reads TAE. Residue 261–263 coordinates ATP; the sequence is RSE. E284 serves as a coordination point for L-serine. 348-351 is a binding site for ATP; that stretch reads EISS. Residue S384 participates in L-serine binding.

It belongs to the class-II aminoacyl-tRNA synthetase family. Type-1 seryl-tRNA synthetase subfamily. Homodimer. The tRNA molecule binds across the dimer.

Its subcellular location is the cytoplasm. The enzyme catalyses tRNA(Ser) + L-serine + ATP = L-seryl-tRNA(Ser) + AMP + diphosphate + H(+). The catalysed reaction is tRNA(Sec) + L-serine + ATP = L-seryl-tRNA(Sec) + AMP + diphosphate + H(+). The protein operates within aminoacyl-tRNA biosynthesis; selenocysteinyl-tRNA(Sec) biosynthesis; L-seryl-tRNA(Sec) from L-serine and tRNA(Sec): step 1/1. In terms of biological role, catalyzes the attachment of serine to tRNA(Ser). Is also able to aminoacylate tRNA(Sec) with serine, to form the misacylated tRNA L-seryl-tRNA(Sec), which will be further converted into selenocysteinyl-tRNA(Sec). This Streptococcus pneumoniae (strain ATCC 700669 / Spain 23F-1) protein is Serine--tRNA ligase.